The primary structure comprises 525 residues: Serine protease 1 (525 aa).

Positions 1–32 are cleaved as a signal peptide; it reads MKCKKPSALFSALALVGALGAASVLGAASANS. Residues 33 to 211 constitute a propeptide that is removed on maturation; the sequence is ASPVAAATVQ…TVSDDVIVPV (179 aa). Residues cysteine 223 and cysteine 239 are joined by a disulfide bond. Residues histidine 238 and aspartate 270 each act as charge relay system in the active site. 5 cysteine pairs are disulfide-bonded: cysteine 310–cysteine 320, cysteine 346–cysteine 376, cysteine 412–cysteine 431, cysteine 453–cysteine 472, and cysteine 496–cysteine 514. The active-site Charge relay system is serine 352. One can recognise a Ricin B-type lectin domain in the interval 396–525; sequence TSTDVTTSYV…GGANQKWWRR (130 aa). The segment at 401–525 is essential for the lytic activity, but not for protease function; sequence TTSYVQGYQN…GGANQKWWRR (125 aa).

It belongs to the peptidase S1 family.

It is found in the secreted. Its function is as follows. Major serine protease exhibiting lytic activity toward living yeast cells. Similar to elastase in its substrate specificity and has a lectin-like affinity for mannose. Mannoproteins may be the native substrate for RPI. The chain is Serine protease 1 from Rarobacter faecitabidus.